Here is a 487-residue protein sequence, read N- to C-terminus: MVYNNLYELTAKELRDKFLSNELSAEEIVNSFYERIEKVEDKIKSFVSLRKDKALDEARKLDEKRKNGEKLGRLAGIPIAIKDNILMEGQKSTSCSKILENYIGIYDATVVKKLKEEDAIIIGITNMDEFAMGSTTKTSFHHKTSNPWDLNRVPGGSSGGAAASVAAQEVPISLGSDTGGSVRQPASFCGVVGFKPTYGRVSRYGLMAFASSLDQIGTLAKTVEDIAICMNVIAGVDDYDATVSKKEVPDYTEFLNKDIKGLKIGLPKEYFIEGLNPEIKNVVDNSVKALKELGAEVVEISLPHTKYAVPTYYVLAPAEASSNLARFDGIRYGYRAKDYTDLESLYVKTRSEGFGAEVKRRIMIGTYVLSAGFYDAYFKKAQKVRTLIKQDFENVLNEVDVILTPVAPSVAFKLSDTKTPIELYLEDIFTISANLAGVPAISLPGGLVDNLPVGVQFMGKPFDEEILIKIADALEKKIGRLNLPKLD.

Residues lysine 82 and serine 157 each act as charge relay system in the active site. Serine 181 (acyl-ester intermediate) is an active-site residue.

Belongs to the amidase family. GatA subfamily. As to quaternary structure, heterotrimer of A, B and C subunits.

The enzyme catalyses L-glutamyl-tRNA(Gln) + L-glutamine + ATP + H2O = L-glutaminyl-tRNA(Gln) + L-glutamate + ADP + phosphate + H(+). Its function is as follows. Allows the formation of correctly charged Gln-tRNA(Gln) through the transamidation of misacylated Glu-tRNA(Gln) in organisms which lack glutaminyl-tRNA synthetase. The reaction takes place in the presence of glutamine and ATP through an activated gamma-phospho-Glu-tRNA(Gln). The sequence is that of Glutamyl-tRNA(Gln) amidotransferase subunit A from Fusobacterium nucleatum subsp. nucleatum (strain ATCC 25586 / DSM 15643 / BCRC 10681 / CIP 101130 / JCM 8532 / KCTC 2640 / LMG 13131 / VPI 4355).